Reading from the N-terminus, the 265-residue chain is Photosystem II 22 kDa protein, chloroplastic (265 aa).

Residues 1–59 (MAQTMLLTSGVTAGHFLRNKSPLAQPKVHHLFLSGNSPVALPSRRQSFVPLALFKPKTK) constitute a chloroplast transit peptide. Tandem repeats lie at residues 54-158 (FKPK…FVDD) and 159-264 (PPTG…DGEE). The next 4 membrane-spanning stretches (helical) occupy residues 96 to 116 (VAMI…KGIL), 130 to 150 (AEPL…GALG), 195 to 215 (LFVG…EIIT), and 229 to 249 (IPIQ…FFAA).

Belongs to the ELIP/psbS family.

The protein resides in the plastid. It is found in the chloroplast thylakoid membrane. Functionally, plays an important role in non-photochemical quenching (NPQ), a process maintains the balance between dissipation and utilization of light energy to minimize generation of oxidizing molecules, thereby protecting the plant against photo-oxidative damage; acts upstream of DLDG1. Is not necessary for efficient light harvesting and photosynthesis. The chain is Photosystem II 22 kDa protein, chloroplastic from Arabidopsis thaliana (Mouse-ear cress).